Here is a 341-residue protein sequence, read N- to C-terminus: Serpentine receptor class epsilon-8 (341 aa).

The next 7 membrane-spanning stretches (helical) occupy residues 37–57 (VGFL…FIFI), 64–86 (LTFL…CIIV), 101–123 (WILV…LPIF), 143–163 (IWVS…SAIA), 169–189 (IPVV…YIGI), 235–255 (VQIS…MDHF), and 264–284 (WSYV…PIIL).

Belongs to the nematode receptor-like protein sre family.

Its subcellular location is the membrane. This is Serpentine receptor class epsilon-8 (sre-8) from Caenorhabditis elegans.